Reading from the N-terminus, the 27-residue chain is CD59 glycoprotein (27 aa).

2 cysteine pairs are disulfide-bonded: Cys3-Cys25 and Cys6-Cys12. Asn17 carries N-linked (GlcNAc...) asparagine glycosylation.

In terms of assembly, interacts with T-cell surface antigen CD2. In terms of processing, N- and O-glycosylated. Expressed in erythrocytes and lymphocytes. Not detected in platelets.

It is found in the cell membrane. The protein localises to the secreted. In terms of biological role, potent inhibitor of the complement membrane attack complex (MAC) action, which protects self-cells from damage during complement activation. Acts by binding to the beta-haipins of C8 (C8A and C8B) components of the assembling MAC, forming an intermolecular beta-sheet that prevents incorporation of the multiple copies of C9 required for complete formation of the osmolytic pore. The polypeptide is CD59 glycoprotein (Ovis aries (Sheep)).